We begin with the raw amino-acid sequence, 470 residues long: Cysteine--tRNA ligase (470 aa).

Cys27 serves as a coordination point for Zn(2+). A 'HIGH' region motif is present at residues 29-39 (PTVYNFFHIGN). Cys211, His236, and Glu240 together coordinate Zn(2+). Positions 268–272 (KMSKS) match the 'KMSKS' region motif. Lys271 is a binding site for ATP.

It belongs to the class-I aminoacyl-tRNA synthetase family. Monomer. The cofactor is Zn(2+).

Its subcellular location is the cytoplasm. It catalyses the reaction tRNA(Cys) + L-cysteine + ATP = L-cysteinyl-tRNA(Cys) + AMP + diphosphate. This is Cysteine--tRNA ligase from Clostridium botulinum (strain Alaska E43 / Type E3).